We begin with the raw amino-acid sequence, 306 residues long: Ribonuclease Z (306 aa).

Positions 63, 65, 67, 68, 141, 211, and 269 each coordinate Zn(2+). Asp-67 (proton acceptor) is an active-site residue.

The protein belongs to the RNase Z family. In terms of assembly, homodimer. Zn(2+) serves as cofactor.

It catalyses the reaction Endonucleolytic cleavage of RNA, removing extra 3' nucleotides from tRNA precursor, generating 3' termini of tRNAs. A 3'-hydroxy group is left at the tRNA terminus and a 5'-phosphoryl group is left at the trailer molecule.. In terms of biological role, zinc phosphodiesterase, which displays some tRNA 3'-processing endonuclease activity. Probably involved in tRNA maturation, by removing a 3'-trailer from precursor tRNA. The chain is Ribonuclease Z from Staphylococcus aureus (strain bovine RF122 / ET3-1).